The sequence spans 244 residues: Type III pantothenate kinase (244 aa).

ATP is bound at residue 8-15; the sequence is DQGNSACK. Substrate contacts are provided by residues Y88 and 94–97; that span reads GADR. The Proton acceptor role is filled by D96. D117 lines the K(+) pocket. T120 serves as a coordination point for ATP. Substrate is bound at residue T175.

Belongs to the type III pantothenate kinase family. Homodimer. NH4(+) is required as a cofactor. Requires K(+) as cofactor.

Its subcellular location is the cytoplasm. The enzyme catalyses (R)-pantothenate + ATP = (R)-4'-phosphopantothenate + ADP + H(+). The protein operates within cofactor biosynthesis; coenzyme A biosynthesis; CoA from (R)-pantothenate: step 1/5. Its function is as follows. Catalyzes the phosphorylation of pantothenate (Pan), the first step in CoA biosynthesis. This Porphyromonas gingivalis (strain ATCC BAA-308 / W83) protein is Type III pantothenate kinase.